The sequence spans 315 residues: Protein SHORT INTERNODES 1 (315 aa).

Residues 1-10 are compositionally biased toward gly residues; sequence MAGFPLGGGS. Disordered stretches follow at residues 1–24 and 64–92; these read MAGFPLGGGSHSRDNPAPPVPPVH and PPAPSLAGASSSSSSRGMRSSGGGGGGGG. Residues 70 to 82 show a composition bias toward low complexity; it reads AGASSSSSSRGMR. Residues 83–92 are compositionally biased toward gly residues; it reads SSGGGGGGGG. Residues C97, C100, C108, C113, C117, and C124 each coordinate Zn(2+). A DNA-binding region (zn(2)-C6 fungal-type; degenerate) is located at residues 97–124; it reads CQDCGNQAKKDCTHMRCRTCCKSRGFAC. Composition is skewed to low complexity over residues 143-156 and 172-182; these read QQLAALAASAAATA and RPSATTPTTSS. Positions 143 to 186 are disordered; the sequence is QQLAALAASAAATAGGAGPSRDPTKRPRARPSATTPTTSSGDQQ. Residues 227 to 230 carry the Required for homo- and heterodimerization motif; the sequence is IGGH.

The protein belongs to the SHI protein family. In terms of assembly, forms homodimers (via C-terminus). Interacts with SPL14/IPA1 (via C-terminus). Predominantly expressed in axillary buds and young panicles.

Its subcellular location is the nucleus. In terms of biological role, regulates tillering and panicle branching by modulating SPL14/IPA1 transcriptional activity on the downstream TB1 and DEP1 target genes. Binds directly to the 5'-T/GCTCTAC-3' DNA motif found in the promoter regions of both TB1 and DEP1. Represses the DNA binding activity of SPL14/IPA1 toward the promoters of both TB1 and DEP1. Exhibits weak transcriptional activation activity in yeast cells. The polypeptide is Protein SHORT INTERNODES 1 (Oryza sativa subsp. japonica (Rice)).